A 359-amino-acid polypeptide reads, in one-letter code: Type II restriction enzyme HgiDI (359 aa).

It catalyses the reaction Endonucleolytic cleavage of DNA to give specific double-stranded fragments with terminal 5'-phosphates.. Functionally, a P subtype restriction enzyme that recognizes the double-stranded sequence 5'-GRCGYC-3' and cleaves after R-2. The sequence is that of Type II restriction enzyme HgiDI from Herpetosiphon aurantiacus (Herpetosiphon giganteus).